The sequence spans 432 residues: Adenylosuccinate synthetase (432 aa).

GTP contacts are provided by residues 12–18 (GDEGKGK) and 40–42 (GHT). The active-site Proton acceptor is Asp-13. Mg(2+)-binding residues include Asp-13 and Gly-40. IMP-binding positions include 13–16 (DEGK), 38–41 (NAGH), Thr-130, Arg-144, Gln-225, Thr-240, and Arg-304. The Proton donor role is filled by His-41. 300–306 (STTGRPR) is a substrate binding site. GTP-binding positions include Arg-306, 332-334 (KLD), and 414-416 (SVG).

Belongs to the adenylosuccinate synthetase family. Homodimer. The cofactor is Mg(2+).

It is found in the cytoplasm. It carries out the reaction IMP + L-aspartate + GTP = N(6)-(1,2-dicarboxyethyl)-AMP + GDP + phosphate + 2 H(+). Its pathway is purine metabolism; AMP biosynthesis via de novo pathway; AMP from IMP: step 1/2. Plays an important role in the de novo pathway of purine nucleotide biosynthesis. Catalyzes the first committed step in the biosynthesis of AMP from IMP. The polypeptide is Adenylosuccinate synthetase (Geobacter sp. (strain M21)).